The sequence spans 215 residues: HTH-type transcriptional repressor FabR (215 aa).

The 61-residue stretch at lysine 10–leucine 70 folds into the HTH tetR-type domain. Positions serine 33–phenylalanine 52 form a DNA-binding region, H-T-H motif.

As to quaternary structure, homodimer.

Its subcellular location is the cytoplasm. Functionally, represses the transcription of fabB, involved in unsaturated fatty acid (UFA) biosynthesis. By controlling UFA production, FabR directly influences the physical properties of the membrane bilayer. This is HTH-type transcriptional repressor FabR from Escherichia coli (strain K12 / MC4100 / BW2952).